The sequence spans 185 residues: Celestoxin (185 aa).

Residues 1–20 (MKFIAAVLLVALLCPKDSTS) form the signal peptide. Residues 21–148 (LASRLSGLLG…GLPVALPVSV (128 aa)) constitute a propeptide that is removed on maturation.

As to expression, expressed by the mandibular venom gland.

It is found in the secreted. In terms of biological role, has a hypotensive activity. This Caribicus warreni (Haitian giant galliwasp) protein is Celestoxin.